The following is a 569-amino-acid chain: BTB/POZ domain-containing protein At3g50840 (569 aa).

One can recognise a BTB domain in the interval 18-87; that stretch reads SDIEIEVDDI…SYGFKVDISV (70 aa). In terms of domain architecture, NPH3 spans 194–459; it reads ELWFEDLTEL…VQVLFLEQLQ (266 aa). Over residues 240–259 the composition is skewed to low complexity; that stretch reads ISRSSSASSSSSSSSTTIAS. The disordered stretch occupies residues 240–261; that stretch reads ISRSSSASSSSSSSSTTIASEN. Tyrosine 400 is modified (phosphotyrosine).

The protein belongs to the NPH3 family.

Its pathway is protein modification; protein ubiquitination. May act as a substrate-specific adapter of an E3 ubiquitin-protein ligase complex (CUL3-RBX1-BTB) which mediates the ubiquitination and subsequent proteasomal degradation of target proteins. The protein is BTB/POZ domain-containing protein At3g50840 of Arabidopsis thaliana (Mouse-ear cress).